The following is a 545-amino-acid chain: Chaperonin GroEL 5 (545 aa).

ATP contacts are provided by residues 30–33 (TLGP), Lys51, 87–91 (DGTTT), Gly415, and Asp495.

This sequence belongs to the chaperonin (HSP60) family. Forms a cylinder of 14 subunits composed of two heptameric rings stacked back-to-back. Interacts with the co-chaperonin GroES.

It is found in the cytoplasm. The enzyme catalyses ATP + H2O + a folded polypeptide = ADP + phosphate + an unfolded polypeptide.. Functionally, together with its co-chaperonin GroES, plays an essential role in assisting protein folding. The GroEL-GroES system forms a nano-cage that allows encapsulation of the non-native substrate proteins and provides a physical environment optimized to promote and accelerate protein folding. In Sinorhizobium medicae (strain WSM419) (Ensifer medicae), this protein is Chaperonin GroEL 5.